A 230-amino-acid chain; its full sequence is Fibrillarin-like rRNA/tRNA 2'-O-methyltransferase (230 aa).

S-adenosyl-L-methionine contacts are provided by residues 87–88 (TT), 105–106 (EF), 130–131 (DA), and 150–153 (DVAQ).

Belongs to the methyltransferase superfamily. Fibrillarin family. In terms of assembly, interacts with nop5. Component of box C/D small ribonucleoprotein (sRNP) particles that contain rpl7ae, FlpA and nop5, plus a guide RNA.

Involved in pre-rRNA and tRNA processing. Utilizes the methyl donor S-adenosyl-L-methionine to catalyze the site-specific 2'-hydroxyl methylation of ribose moieties in rRNA and tRNA. Site specificity is provided by a guide RNA that base pairs with the substrate. Methylation occurs at a characteristic distance from the sequence involved in base pairing with the guide RNA. In Methanococcus maripaludis (strain C6 / ATCC BAA-1332), this protein is Fibrillarin-like rRNA/tRNA 2'-O-methyltransferase.